Consider the following 338-residue polypeptide: Phenylalanine--tRNA ligase alpha subunit (338 aa).

E252 is a binding site for Mg(2+).

It belongs to the class-II aminoacyl-tRNA synthetase family. Phe-tRNA synthetase alpha subunit type 1 subfamily. As to quaternary structure, tetramer of two alpha and two beta subunits. Mg(2+) is required as a cofactor.

Its subcellular location is the cytoplasm. The enzyme catalyses tRNA(Phe) + L-phenylalanine + ATP = L-phenylalanyl-tRNA(Phe) + AMP + diphosphate + H(+). The sequence is that of Phenylalanine--tRNA ligase alpha subunit from Pseudomonas fluorescens (strain Pf0-1).